We begin with the raw amino-acid sequence, 162 residues long: Proepiregulin (162 aa).

Positions 1–22 (METFPAAWVLALLCLGSHLLQA) are cleaved as a signal peptide. Residues 23–55 (VISTTVIPSCIPEESEDNCTALVQMEDDPRVAQ) constitute a propeptide that is removed on maturation. N40 carries an N-linked (GlcNAc...) asparagine glycan. The 41-residue stretch at 57-97 (LITKCSSDMDGYCLHGHCIYLVDMSEKYCRCEVGYTGLRCE) folds into the EGF-like domain. 3 disulfides stabilise this stretch: C61–C74, C69–C85, and C87–C96. A propeptide spans 102–162 (TVHQPLSREY…TSGGPGLPQV (61 aa)) (removed in mature form). Residues 113-133 (ALTVILVFLFLIVTAGSMYYF) traverse the membrane as a helical segment.

Interacts with EGFR and ERBB4.

It localises to the secreted. Its subcellular location is the extracellular space. The protein resides in the cell membrane. In terms of biological role, ligand of the EGF receptor/EGFR and ERBB4. Stimulates EGFR and ERBB4 tyrosine phosphorylation. Contributes to inflammation, wound healing, tissue repair, and oocyte maturation by regulating angiogenesis and vascular remodeling and by stimulating cell proliferation. The protein is Proepiregulin (Ereg) of Rattus norvegicus (Rat).